Here is a 391-residue protein sequence, read N- to C-terminus: 3-ketoacyl-CoA thiolase (391 aa).

The Acyl-thioester intermediate role is filled by Cys-95. Catalysis depends on proton acceptor residues His-347 and Cys-377.

The protein belongs to the thiolase-like superfamily. Thiolase family. Heterotetramer of two alpha chains (FadB) and two beta chains (FadA).

It localises to the cytoplasm. It catalyses the reaction an acyl-CoA + acetyl-CoA = a 3-oxoacyl-CoA + CoA. Its pathway is lipid metabolism; fatty acid beta-oxidation. In terms of biological role, catalyzes the final step of fatty acid oxidation in which acetyl-CoA is released and the CoA ester of a fatty acid two carbons shorter is formed. This chain is 3-ketoacyl-CoA thiolase, found in Pseudomonas fluorescens (strain Pf0-1).